Here is a 1849-residue protein sequence, read N- to C-terminus: UPF0606 protein KIAA1549L (1849 aa).

Polar residues predominate over residues 1-10; it reads MDHTASQNAQ. Disordered regions lie at residues 1-70, 142-166, 213-242, and 529-586; these read MDHT…LLQL, ATAN…PALS, PTEN…PATR, and RHSV…ERNA. Composition is skewed to polar residues over residues 529-541 and 552-586; these read RHSV…QLPN and PGPT…ERNA. Residues 958–986 adopt a coiled-coil conformation; sequence KFAQTMEQRLQKAFQDAERKVLNTKSNLT. Residues 1180-1200 traverse the membrane as a helical segment; that stretch reads LWIIAAVLAPIAVVTVIIIII. 4 disordered regions span residues 1258-1338, 1460-1546, 1656-1679, and 1769-1819; these read LPIR…EEEG, SKNR…SQPS, RSTS…AQLH, and SRYP…APLT. Polar residues-rich tracts occupy residues 1290–1319, 1463–1482, and 1537–1546; these read PSEN…AQQK, RQQM…SPSP, and ETSTLSSQPS. Low complexity-rich tracts occupy residues 1769-1786 and 1795-1809; these read SRYP…YSQP and QAPA…QSLA.

This sequence belongs to the UPF0606 family.

Its subcellular location is the membrane. The chain is UPF0606 protein KIAA1549L (KIAA1549L) from Homo sapiens (Human).